A 464-amino-acid polypeptide reads, in one-letter code: GDNF family receptor alpha-2 (464 aa).

Residues 1–21 form the signal peptide; the sequence is MILANVFCLFFFLDETLRSLA. Cystine bridges form between Cys40–Cys93, Cys95–Cys105, Cys161–Cys222, Cys168–Cys174, Cys185–Cys200, Cys195–Cys241, Cys224–Cys229, Cys251–Cys323, Cys258–Cys264, Cys275–Cys293, and Cys285–Cys347. An N-linked (GlcNAc...) asparagine glycan is attached at Asn52. Asn357 carries an N-linked (GlcNAc...) asparagine glycan. The interval 363 to 392 is disordered; sequence VSPKGPSFQATQAPRVEKTPSLPDDLSDST. Low complexity predominate over residues 381-392; it reads TPSLPDDLSDST. A glycan (N-linked (GlcNAc...) asparagine) is linked at Asn413. A lipid anchor (GPI-anchor amidated serine) is attached at Ser444. Positions 445–464 are cleaved as a propeptide — removed in mature form; that stretch reads RARPSAALTVLSVLMLKLAL.

This sequence belongs to the GDNFR family. As to quaternary structure, interacts with NRTN ligand and RET: forms a 2:2:2 ternary complex composed of NRTN ligand, GFRA2 and RET receptor. Also forms a 4:4:4 tetrameric complex composed of 4 copies of NRTN ligand, GFRA2 and RET receptor, which prevents endocytosis of RET. Interacts with SORL1. As to expression, found in both brain and placenta.

The protein resides in the cell membrane. In terms of biological role, receptor for neurturin (NRTN), a growth factor that supports the survival of sympathetic neurons. NRTN-binding leads to autophosphorylation and activation of the RET receptor. Also able to mediate GDNF signaling through the RET tyrosine kinase receptor. Its function is as follows. Participates in NRTN-induced 'Ser-727' phosphorylation of STAT3. The sequence is that of GDNF family receptor alpha-2 (GFRA2) from Homo sapiens (Human).